Consider the following 408-residue polypeptide: Apoptosis-inducing factor homolog A (408 aa).

Residues 34–38 (GCGFG), R69, and D314 contribute to the FAD site.

Belongs to the FAD-dependent oxidoreductase family. Requires FAD as cofactor.

Its function is as follows. Putative FAD-dependent oxidoreductase. The polypeptide is Apoptosis-inducing factor homolog A (aifA) (Dictyostelium discoideum (Social amoeba)).